A 78-amino-acid polypeptide reads, in one-letter code: Small ribosomal subunit protein uS17 (78 aa).

This sequence belongs to the universal ribosomal protein uS17 family. In terms of assembly, part of the 30S ribosomal subunit.

Functionally, one of the primary rRNA binding proteins, it binds specifically to the 5'-end of 16S ribosomal RNA. The protein is Small ribosomal subunit protein uS17 of Sinorhizobium fredii (strain NBRC 101917 / NGR234).